Consider the following 111-residue polypeptide: MTLSLNTPPGVHCQPLKHQRIPLLQLQLKSQPKSQLKSQPNKVLALKLLPPTLVPLLRLCQLPVLCWLVLPLYCCNLLNLFFNIFLEKWLSTFPSIQLPQNRFISINKIFW.

The chain crosses the membrane as a helical span at residues Val-64–Leu-86.

It is found in the membrane. This is an uncharacterized protein from Saccharomyces cerevisiae (strain ATCC 204508 / S288c) (Baker's yeast).